The primary structure comprises 278 residues: MMKINSYAKINLSLDVLDLREDGYHNIDTIMNLIDLHDVIEINRNNTNELKLSSNNSNFPTDKTNLIYKIFENLKKFRKINCSYDVFVDKQIPISAGLAGGSSNACEFLMYVNDDLSLNLSNQEIKEICRLTGADTFYFTSKKCVRATGIGNEFVRLSDFSNKNIIIVNNGMSISSKDVYDNLKESNGGLGKITVAIDSRDYETFYRKAFNTMESVSERLVEEISDIKEQLNNLGCDLSLMSGSGPTVFGIFENYNDYENCYSKLKDKYKYVFKTKTL.

Lys9 is a catalytic residue. Residue 93-103 (PISAGLAGGSS) coordinates ATP. Asp135 is an active-site residue.

It belongs to the GHMP kinase family. IspE subfamily.

It catalyses the reaction 4-CDP-2-C-methyl-D-erythritol + ATP = 4-CDP-2-C-methyl-D-erythritol 2-phosphate + ADP + H(+). It participates in isoprenoid biosynthesis; isopentenyl diphosphate biosynthesis via DXP pathway; isopentenyl diphosphate from 1-deoxy-D-xylulose 5-phosphate: step 3/6. In terms of biological role, catalyzes the phosphorylation of the position 2 hydroxy group of 4-diphosphocytidyl-2C-methyl-D-erythritol. The sequence is that of 4-diphosphocytidyl-2-C-methyl-D-erythritol kinase from Finegoldia magna (strain ATCC 29328 / DSM 20472 / WAL 2508) (Peptostreptococcus magnus).